The sequence spans 192 residues: Ion-translocating oxidoreductase complex subunit A (192 aa).

6 consecutive transmembrane segments (helical) span residues 5 to 25 (LLLL…FLGL), 39 to 59 (IGMS…SYLV), 65 to 85 (LPFD…AVVV), 102 to 122 (ALGI…VALL), 134 to 154 (AIYG…FSAM), and 171 to 191 (AIAM…TGLV).

It belongs to the NqrDE/RnfAE family. In terms of assembly, the complex is composed of six subunits: RnfA, RnfB, RnfC, RnfD, RnfE and RnfG.

It is found in the cell inner membrane. Functionally, part of a membrane-bound complex that couples electron transfer with translocation of ions across the membrane. This chain is Ion-translocating oxidoreductase complex subunit A, found in Shewanella oneidensis (strain ATCC 700550 / JCM 31522 / CIP 106686 / LMG 19005 / NCIMB 14063 / MR-1).